The sequence spans 1297 residues: DNA-directed RNA polymerase subunit beta' (1297 aa).

Residues cysteine 60, cysteine 62, cysteine 75, and cysteine 78 each coordinate Zn(2+). The Mg(2+) site is built by aspartate 535, aspartate 537, and aspartate 539. Positions 883, 961, 968, and 971 each coordinate Zn(2+).

The protein belongs to the RNA polymerase beta' chain family. As to quaternary structure, the RNAP catalytic core consists of 2 alpha, 1 beta, 1 beta' and 1 omega subunit. When a sigma factor is associated with the core the holoenzyme is formed, which can initiate transcription. It depends on Mg(2+) as a cofactor. The cofactor is Zn(2+).

It carries out the reaction RNA(n) + a ribonucleoside 5'-triphosphate = RNA(n+1) + diphosphate. Its function is as follows. DNA-dependent RNA polymerase catalyzes the transcription of DNA into RNA using the four ribonucleoside triphosphates as substrates. In Salinispora tropica (strain ATCC BAA-916 / DSM 44818 / JCM 13857 / NBRC 105044 / CNB-440), this protein is DNA-directed RNA polymerase subunit beta'.